We begin with the raw amino-acid sequence, 259 residues long: Deoxyribose-phosphate aldolase (259 aa).

The active-site Proton donor/acceptor is Asp102. Lys167 serves as the catalytic Schiff-base intermediate with acetaldehyde. Lys201 functions as the Proton donor/acceptor in the catalytic mechanism.

Belongs to the DeoC/FbaB aldolase family. DeoC type 2 subfamily.

The protein resides in the cytoplasm. It carries out the reaction 2-deoxy-D-ribose 5-phosphate = D-glyceraldehyde 3-phosphate + acetaldehyde. It functions in the pathway carbohydrate degradation; 2-deoxy-D-ribose 1-phosphate degradation; D-glyceraldehyde 3-phosphate and acetaldehyde from 2-deoxy-alpha-D-ribose 1-phosphate: step 2/2. Its function is as follows. Catalyzes a reversible aldol reaction between acetaldehyde and D-glyceraldehyde 3-phosphate to generate 2-deoxy-D-ribose 5-phosphate. The sequence is that of Deoxyribose-phosphate aldolase from Cronobacter sakazakii (strain ATCC BAA-894) (Enterobacter sakazakii).